The sequence spans 213 residues: Large ribosomal subunit protein uL3 (213 aa).

The segment at 135–155 (THGSKNHRLPGSTGAGTTPGR) is disordered.

It belongs to the universal ribosomal protein uL3 family. In terms of assembly, part of the 50S ribosomal subunit. Forms a cluster with proteins L14 and L19.

Its function is as follows. One of the primary rRNA binding proteins, it binds directly near the 3'-end of the 23S rRNA, where it nucleates assembly of the 50S subunit. The protein is Large ribosomal subunit protein uL3 of Synechocystis sp. (strain ATCC 27184 / PCC 6803 / Kazusa).